The chain runs to 723 residues: Catalase-peroxidase (723 aa).

Positions 98-226 (WHAAGSYRAA…LAAVQMGLIY (129 aa)) form a cross-link, tryptophyl-tyrosyl-methioninium (Trp-Tyr) (with M-252). The Proton acceptor role is filled by His-99. The segment at residues 226–252 (YVNPEGVNGKPDPLKTAAQVRETFARM) is a cross-link (tryptophyl-tyrosyl-methioninium (Tyr-Met) (with W-98)). Position 267 (His-267) interacts with heme b. Residues 267 to 286 (HTVGKTHGNGRAENLGPSPE) form a disordered region.

It belongs to the peroxidase family. Peroxidase/catalase subfamily. In terms of assembly, homodimer or homotetramer. The cofactor is heme b. In terms of processing, formation of the three residue Trp-Tyr-Met cross-link is important for the catalase, but not the peroxidase activity of the enzyme.

The enzyme catalyses H2O2 + AH2 = A + 2 H2O. It carries out the reaction 2 H2O2 = O2 + 2 H2O. In terms of biological role, bifunctional enzyme with both catalase and broad-spectrum peroxidase activity. The protein is Catalase-peroxidase of Thioalkalivibrio sulfidiphilus (strain HL-EbGR7).